The chain runs to 330 residues: Inactive hydroxysteroid dehydrogenase-like protein 1 (330 aa).

A2 is modified (N-acetylalanine). The required for mitochondria translocation stretch occupies residues A2–A82. NADP(+) is bound by residues G74–G80, D125, and K222.

This sequence belongs to the short-chain dehydrogenases/reductases (SDR) family. 17-beta-HSD 3 subfamily. As to quaternary structure, interacts with STYXL1.

The protein resides in the mitochondrion. This Pongo abelii (Sumatran orangutan) protein is Inactive hydroxysteroid dehydrogenase-like protein 1 (HSDL1).